The chain runs to 126 residues: Large ribosomal subunit protein eL18 (126 aa).

The protein belongs to the eukaryotic ribosomal protein eL18 family.

The sequence is that of Large ribosomal subunit protein eL18 from Methanosarcina acetivorans (strain ATCC 35395 / DSM 2834 / JCM 12185 / C2A).